A 250-amino-acid chain; its full sequence is Trypsin (250 aa).

A signal peptide spans 1–15 (MRLLALLLMVGAAVA). A propeptide spans 16–22 (VPREDGR) (activation peptide). In terms of domain architecture, Peptidase S1 spans 23-247 (IIGGHECAAH…FLGWIERTLE (225 aa)). 6 cysteine pairs are disulfide-bonded: Cys29–Cys163, Cys47–Cys63, Cys133–Cys236, Cys140–Cys209, Cys174–Cys188, and Cys199–Cys223. Catalysis depends on charge relay system residues His62 and Asp106. Ser203 functions as the Charge relay system in the catalytic mechanism.

It belongs to the peptidase S1 family.

The protein localises to the secreted. The protein resides in the extracellular space. It catalyses the reaction Preferential cleavage: Arg-|-Xaa, Lys-|-Xaa.. This is Trypsin from Pleuronectes platessa (European plaice).